Here is a 183-residue protein sequence, read N- to C-terminus: Transmembrane and coiled-coil domain-containing protein 2 (183 aa).

The helical transmembrane segment at 54–74 (VQIILGISFLTLLAIGLFALW) threads the bilayer. Residues 127 to 150 (GLQEKILKKLQMVENKVRDLEGII) adopt a coiled-coil conformation.

The protein resides in the membrane. The sequence is that of Transmembrane and coiled-coil domain-containing protein 2 (Tmco2) from Mus musculus (Mouse).